Here is a 98-residue protein sequence, read N- to C-terminus: Lactococcin-A immunity protein (98 aa).

In terms of biological role, imparts immunity to lactococcin-A to naturally sensitive host strains. This Lactococcus lactis subsp. cremoris (Streptococcus cremoris) protein is Lactococcin-A immunity protein (lciA).